We begin with the raw amino-acid sequence, 349 residues long: Phosphoribosylformylglycinamidine cyclo-ligase (349 aa).

Belongs to the AIR synthase family.

Its subcellular location is the cytoplasm. The catalysed reaction is 2-formamido-N(1)-(5-O-phospho-beta-D-ribosyl)acetamidine + ATP = 5-amino-1-(5-phospho-beta-D-ribosyl)imidazole + ADP + phosphate + H(+). It functions in the pathway purine metabolism; IMP biosynthesis via de novo pathway; 5-amino-1-(5-phospho-D-ribosyl)imidazole from N(2)-formyl-N(1)-(5-phospho-D-ribosyl)glycinamide: step 2/2. This is Phosphoribosylformylglycinamidine cyclo-ligase from Methanococcus maripaludis (strain C7 / ATCC BAA-1331).